The chain runs to 266 residues: Putative zinc finger protein 034R (266 aa).

The disordered stretch occupies residues Ser-84–Pro-176. A compositionally biased stretch (basic and acidic residues) spans Ser-88–Pro-100. Polar residues-rich tracts occupy residues Lys-105–Leu-119 and Gly-160–Pro-176. Residues Cys-180–Gly-192 form a C3H1-type zinc finger.

The protein belongs to the IIV-6 077L family.

The chain is Putative zinc finger protein 034R from Aedes vexans (Inland floodwater mosquito).